Consider the following 314-residue polypeptide: Lysophospholipase D GDPD1 (314 aa).

The Extracellular portion of the chain corresponds to 1–3 (MSS). A helical transmembrane segment spans residues 4 to 24 (TAAFCLLSTLGGYLVTSFLLL). The Cytoplasmic portion of the chain corresponds to 25 to 195 (KYPALLHQRK…VDKCYKENSD (171 aa)). The region spanning 40–309 (SRHISHRGGA…DYPTKLKDFL (270 aa)) is the GP-PDE domain. Glu-72, Asp-74, and His-87 together coordinate a divalent metal cation. Residues 196-216 (IPILFSLQRVLLILGLFFTGL) traverse the membrane as a helical segment. Topologically, residues 217 to 314 (LPFVPIREQF…LKDFLNNFSA (98 aa)) are extracellular.

It belongs to the glycerophosphoryl diester phosphodiesterase family. In terms of tissue distribution, widely expressed.

Its subcellular location is the cytoplasm. The protein resides in the membrane. It is found in the perinuclear region. It localises to the endoplasmic reticulum. The enzyme catalyses 1-hexadecanoyl-sn-glycero-3-phosphocholine + H2O = 1-hexadecanoyl-sn-glycero-3-phosphate + choline + H(+). It carries out the reaction 1-hexadecanoyl-sn-glycero-3-phosphoethanolamine + H2O = 1-hexadecanoyl-sn-glycero-3-phosphate + ethanolamine + H(+). It catalyses the reaction N-hexadecanoyl-sn-glycero-3-phosphoethanolamine + H2O = N-hexadecanoylethanolamine + sn-glycerol 3-phosphate + H(+). The catalysed reaction is N-(5Z,8Z,11Z,14Z-eicosatetraenoyl)-1-(9Z-octadecenoyl)-sn-glycero-3-phosphoethanolamine + H2O = N-(5Z,8Z,11Z,14Z-eicosatetraenoyl)-ethanolamine + 1-(9Z-octadecenoyl)-sn-glycero-3-phosphate + H(+). The enzyme catalyses N,1-di-(9Z-octadecenoyl)-sn-glycero-3-phosphoethanolamine + H2O = N-(9Z-octadecenoyl) ethanolamine + 1-(9Z-octadecenoyl)-sn-glycero-3-phosphate + H(+). It carries out the reaction N-hexadecanoyl-1-(9Z-octadecenoyl)-sn-glycero-3-phosphoethanolamine + H2O = N-hexadecanoylethanolamine + 1-(9Z-octadecenoyl)-sn-glycero-3-phosphate + H(+). It catalyses the reaction a 1-O-alkyl-sn-glycero-3-phosphocholine + H2O = a 1-O-alkyl-sn-glycero-3-phosphate + choline + H(+). The catalysed reaction is 1-O-hexadecyl-sn-glycero-3-phosphocholine + H2O = 1-O-hexadecyl-sn-glycero-3-phosphate + choline + H(+). The enzyme catalyses 1-(9Z-octadecenoyl)-sn-glycero-3-phosphocholine + H2O = 1-(9Z-octadecenoyl)-sn-glycero-3-phosphate + choline + H(+). It carries out the reaction N,1-dihexadecanoyl-sn-glycero-3-phosphoethanolamine + H2O = N-hexadecanoylethanolamine + 1-hexadecanoyl-sn-glycero-3-phosphate + H(+). It catalyses the reaction 1-O-(1Z-octadecenyl)-sn-glycero-3-phospho-(N-5Z,8Z,11Z,14Z-eicosatetraenoyl)-ethanolamine + H2O = 1-O-(1Z-octadecenyl)-sn-glycero-3-phosphate + N-(5Z,8Z,11Z,14Z-eicosatetraenoyl)-ethanolamine + H(+). The catalysed reaction is 1-O-(1Z-octadecenyl)-sn-glycero-3-phospho-(N-9Z-octadecenoyl)-ethanolamine + H2O = 1-O-(1Z-octadecenyl)-sn-glycero-3-phosphate + N-(9Z-octadecenoyl) ethanolamine + H(+). The enzyme catalyses 1-O-(1Z-octadecenyl)-sn-glycero-3-phospho-N-hexadecanoyl-ethanolamine + H2O = 1-O-(1Z-octadecenyl)-sn-glycero-3-phosphate + N-hexadecanoylethanolamine + H(+). With respect to regulation, lysophospholipase D activity is increased by magnesium and manganese and inhibited by calcium in a concentration dependent manner. Loss of lysophospholipase D activity by addition of EDTA. Its function is as follows. Hydrolyzes lysoglycerophospholipids to produce lysophosphatidic acid (LPA) and the corresponding amines. Shows a preference for 1-O-alkyl-sn-glycero-3-phosphocholine (lyso-PAF), lysophosphatidylethanolamine (lyso-PE) and lysophosphatidylcholine (lyso-PC). May be involved in bioactive N-acylethanolamine biosynthesis from both N-acyl-lysoplasmenylethanolamin (N-acyl-lysoPlsEt) and N-acyl-lysophosphatidylethanolamin (N-acyl-lysoPE). In addition, hydrolyzes glycerophospho-N-acylethanolamine to N-acylethanolamine. Does not display glycerophosphodiester phosphodiesterase activity, since it cannot hydrolyze either glycerophosphoinositol or glycerophosphocholine. The sequence is that of Lysophospholipase D GDPD1 from Mus musculus (Mouse).